The primary structure comprises 319 residues: Probable cell division protein WhiA (319 aa).

A DNA-binding region (H-T-H motif) is located at residues 277 to 310 (SLEELGKLAEPAMTKDAIAGRIRRLLCLADKRAK).

It belongs to the WhiA family.

Its function is as follows. Involved in cell division and chromosome segregation. The protein is Probable cell division protein WhiA of Tropheryma whipplei (strain Twist) (Whipple's bacillus).